The chain runs to 98 residues: Large ribosomal subunit protein bL25 (98 aa).

Positions 1–22 (MANFVLNATARNEDKQGKGASR) are disordered.

It belongs to the bacterial ribosomal protein bL25 family. In terms of assembly, part of the 50S ribosomal subunit; part of the 5S rRNA/L5/L18/L25 subcomplex. Contacts the 5S rRNA. Binds to the 5S rRNA independently of L5 and L18.

This is one of the proteins that binds to the 5S RNA in the ribosome where it forms part of the central protuberance. The sequence is that of Large ribosomal subunit protein bL25 from Acinetobacter baylyi (strain ATCC 33305 / BD413 / ADP1).